Reading from the N-terminus, the 677-residue chain is Fermitin family homolog 1 (677 aa).

The FERM domain occupies 96–653; the sequence is MLRLRLPNAK…HEYIGGYIFL (558 aa). The tract at residues 157-181 is disordered; it reads KEPVIEDILNLESSSTSSGSPVSPG. A compositionally biased stretch (low complexity) spans 169 to 181; sequence SSSTSSGSPVSPG. Phosphoserine occurs at positions 170 and 179. Residues 377–473 enclose the PH domain; that stretch reads KLFRPKKLML…WMAACILASK (97 aa).

Belongs to the kindlin family. Interacts with the cytoplasmic domain of integrins ITGB1 and ITGB3.

Its subcellular location is the cytoplasm. It localises to the cytoskeleton. It is found in the cell junction. The protein localises to the focal adhesion. The protein resides in the cell projection. Its subcellular location is the ruffle membrane. Its function is as follows. Involved in cell adhesion. Contributes to integrin activation. When coexpressed with talin, potentiates activation of ITGA2B. Required for normal keratinocyte proliferation. Required for normal polarization of basal keratinocytes in skin, and for normal cell shape. Required for normal adhesion of keratinocytes to fibronectin and laminin, and for normal keratinocyte migration to wound sites. The polypeptide is Fermitin family homolog 1 (Fermt1) (Mus musculus (Mouse)).